Here is a 483-residue protein sequence, read N- to C-terminus: Protein nucleotidyltransferase YdiU (483 aa).

ATP is bound by residues G87, G89, R90, K110, D122, G123, R173, and R180. D249 serves as the catalytic Proton acceptor. Residues N250 and D259 each coordinate Mg(2+). D259 is a binding site for ATP.

Belongs to the SELO family. Mg(2+) serves as cofactor. The cofactor is Mn(2+).

The enzyme catalyses L-seryl-[protein] + ATP = 3-O-(5'-adenylyl)-L-seryl-[protein] + diphosphate. The catalysed reaction is L-threonyl-[protein] + ATP = 3-O-(5'-adenylyl)-L-threonyl-[protein] + diphosphate. It carries out the reaction L-tyrosyl-[protein] + ATP = O-(5'-adenylyl)-L-tyrosyl-[protein] + diphosphate. It catalyses the reaction L-histidyl-[protein] + UTP = N(tele)-(5'-uridylyl)-L-histidyl-[protein] + diphosphate. The enzyme catalyses L-seryl-[protein] + UTP = O-(5'-uridylyl)-L-seryl-[protein] + diphosphate. The catalysed reaction is L-tyrosyl-[protein] + UTP = O-(5'-uridylyl)-L-tyrosyl-[protein] + diphosphate. In terms of biological role, nucleotidyltransferase involved in the post-translational modification of proteins. It can catalyze the addition of adenosine monophosphate (AMP) or uridine monophosphate (UMP) to a protein, resulting in modifications known as AMPylation and UMPylation. In Pectobacterium atrosepticum (strain SCRI 1043 / ATCC BAA-672) (Erwinia carotovora subsp. atroseptica), this protein is Protein nucleotidyltransferase YdiU.